A 277-amino-acid chain; its full sequence is Large ribosomal subunit protein uL2 (277 aa).

Disordered stretches follow at residues 35-58 (QPLP…GGGH) and 213-277 (WKGI…RKRK).

This sequence belongs to the universal ribosomal protein uL2 family. Part of the 50S ribosomal subunit. Forms a bridge to the 30S subunit in the 70S ribosome.

One of the primary rRNA binding proteins. Required for association of the 30S and 50S subunits to form the 70S ribosome, for tRNA binding and peptide bond formation. It has been suggested to have peptidyltransferase activity; this is somewhat controversial. Makes several contacts with the 16S rRNA in the 70S ribosome. The chain is Large ribosomal subunit protein uL2 from Staphylococcus carnosus (strain TM300).